Reading from the N-terminus, the 355-residue chain is Peptide chain release factor 1 (355 aa).

Residue glutamine 231 is modified to N5-methylglutamine. The span at 280-291 (SERLAKESEARK) shows a compositional bias: basic and acidic residues. Positions 280–303 (SERLAKESEARKSQVGSGDRSERI) are disordered.

The protein belongs to the prokaryotic/mitochondrial release factor family. Methylated by PrmC. Methylation increases the termination efficiency of RF1.

The protein resides in the cytoplasm. In terms of biological role, peptide chain release factor 1 directs the termination of translation in response to the peptide chain termination codons UAG and UAA. This is Peptide chain release factor 1 from Campylobacter jejuni (strain RM1221).